We begin with the raw amino-acid sequence, 353 residues long: D-alanine--D-alanine ligase A (353 aa).

The ATP-grasp domain maps to 141–346 (KRLVNEAGLS…YPEIINRLVA (206 aa)). 169-224 (EQALGLPIFIKPARQGSSVGVHKVVTEADYQAAMSDGFIYDDKLLAEEFIQAREVE) is an ATP binding site. 3 residues coordinate Mg(2+): aspartate 300, glutamate 313, and asparagine 315.

It belongs to the D-alanine--D-alanine ligase family. Mg(2+) serves as cofactor. It depends on Mn(2+) as a cofactor.

The protein localises to the cytoplasm. The enzyme catalyses 2 D-alanine + ATP = D-alanyl-D-alanine + ADP + phosphate + H(+). Its pathway is cell wall biogenesis; peptidoglycan biosynthesis. Cell wall formation. The sequence is that of D-alanine--D-alanine ligase A from Brucella melitensis biotype 1 (strain ATCC 23456 / CCUG 17765 / NCTC 10094 / 16M).